The chain runs to 830 residues: Interleukin-4 receptor subunit alpha (830 aa).

Positions 1 to 32 are cleaved as a signal peptide; sequence MGWLCPGLTFSVSCLILVWAAGSGVTCVSPGG. The Extracellular portion of the chain corresponds to 33–240; sequence VRVLEWPICL…NYYEEPLEQR (208 aa). Residues Cys41 and Cys51 are joined by a disulfide bond. 2 N-linked (GlcNAc...) asparagine glycosylation sites follow: Asn60 and Asn78. Cys82 and Cys94 form a disulfide bridge. N-linked (GlcNAc...) asparagine glycans are attached at residues Asn120, Asn142, and Asn170. Positions 133–232 constitute a Fibronectin type-III domain; the sequence is APRNLMVHAN…WSPSVKWLNY (100 aa). Ser172 carries the phosphoserine modification. N-linked (GlcNAc...) asparagine glycosylation is found at Asn184 and Asn217. The short motif at 220 to 224 is the WSXWS motif element; the sequence is WSEWS. The chain crosses the membrane as a helical span at residues 241 to 264; sequence LPLGVSISCVVILIICLSCYFGII. Over 265–830 the chain is Cytoplasmic; the sequence is RIKKEWWDQI…SPGPACMDTS (566 aa). Residues 270 to 278 carry the Box 1 motif motif; that stretch reads WWDQIPNPA. A compositionally biased stretch (acidic residues) spans 378 to 387; it reads ENEEEEEEED. Disordered stretches follow at residues 378-403 and 450-488; these read ENEE…GSFQ and MPWA…SLAS. The tract at residues 444-564 is required for IRS1 activation and IL4-induced cell growth; the sequence is ENASAPMPWA…ETWEQILRQS (121 aa). Tyr504 carries the post-translational modification Phosphotyrosine. 2 disordered regions span residues 508 to 610 and 623 to 696; these read STFL…EAGY and CPGT…DGQK. Residues 518–534 show a composition bias toward acidic residues; that stretch reads GELDSDPELAEALEEVE. Residues 538–551 show a composition bias toward pro residues; sequence PAAPQPSEPPPTLQ. The interval 564–662 is required for IL4-induced gene expression; sequence SVLQRRAAPA…VPTPLFTFGL (99 aa). A compositionally biased stretch (low complexity) spans 570 to 582; it reads AAPAPASGPSSSG. Phosphotyrosine occurs at positions 583 and 610. A compositionally biased stretch (polar residues) spans 623 to 635; it reads CPGTSGLEPSSGE. Tyr638 is subject to Phosphotyrosine. 2 stretches are compositionally biased toward pro residues: residues 646–655 and 665–676; these read PGCPETPVPT and EPPPSPQNPPFP. An ITIM motif motif is present at residues 716-721; sequence IVYSAL. A disordered region spans residues 811-830; sequence SQTPTAVAMLSPGPACMDTS.

The protein belongs to the type I cytokine receptor family. Type 4 subfamily. In terms of assembly, the functional IL4 receptor is formed by initial binding of IL4 to IL4R. Subsequent recruitment to the complex of the common gamma chain, in immune cells, creates a type I receptor and, in non-immune cells, of IL13RA1 forms a type II receptor. IL4R can also interact with the IL13/IL13RA1 complex to form a similar type II receptor. Interacts with PIK3C3. Interacts with the SH2-containing phosphatases, PTPN6/SHIP1, PTPN11/SHIP2 and INPP5D/SHIP. Interacts with JAK1 through a Box 1-containing region; inhibited by SOCS5. Interacts with SOCS5; inhibits IL4 signaling. Interacts with JAK3. Interacts with CLM1. Interacts with IL13RA2. In terms of processing, on IL4 binding, phosphorylated on C-terminal tyrosine residues.

It is found in the membrane. In terms of biological role, receptor for both interleukin 4 and interleukin 13. Couples to the JAK1/2/3-STAT6 pathway. The IL4 response is involved in promoting Th2 differentiation. The IL4/IL13 responses are involved in regulating IgE production and, chemokine and mucus production at sites of allergic inflammation. In certain cell types, can signal through activation of insulin receptor substrates, IRS1/IRS2. The protein is Interleukin-4 receptor subunit alpha (IL4R) of Sus scrofa (Pig).